The chain runs to 199 residues: Fe/S biogenesis protein NfuA (199 aa).

Positions 156 and 159 each coordinate [4Fe-4S] cluster.

This sequence belongs to the NfuA family. As to quaternary structure, homodimer. Requires [4Fe-4S] cluster as cofactor.

Involved in iron-sulfur cluster biogenesis. Binds a 4Fe-4S cluster, can transfer this cluster to apoproteins, and thereby intervenes in the maturation of Fe/S proteins. Could also act as a scaffold/chaperone for damaged Fe/S proteins. The polypeptide is Fe/S biogenesis protein NfuA (Haemophilus ducreyi (strain 35000HP / ATCC 700724)).